The chain runs to 176 residues: Large ribosomal subunit protein uL10 (176 aa).

It belongs to the universal ribosomal protein uL10 family. In terms of assembly, part of the ribosomal stalk of the 50S ribosomal subunit. The N-terminus interacts with L11 and the large rRNA to form the base of the stalk. The C-terminus forms an elongated spine to which L12 dimers bind in a sequential fashion forming a multimeric L10(L12)X complex.

Forms part of the ribosomal stalk, playing a central role in the interaction of the ribosome with GTP-bound translation factors. In Carboxydothermus hydrogenoformans (strain ATCC BAA-161 / DSM 6008 / Z-2901), this protein is Large ribosomal subunit protein uL10.